The chain runs to 692 residues: Elongation factor G (692 aa).

One can recognise a tr-type G domain in the interval Glu8–Thr283. Residues Ala17 to Thr24, Asp81 to His85, and Asn135 to Asp138 contribute to the GTP site.

It belongs to the TRAFAC class translation factor GTPase superfamily. Classic translation factor GTPase family. EF-G/EF-2 subfamily.

It is found in the cytoplasm. In terms of biological role, catalyzes the GTP-dependent ribosomal translocation step during translation elongation. During this step, the ribosome changes from the pre-translocational (PRE) to the post-translocational (POST) state as the newly formed A-site-bound peptidyl-tRNA and P-site-bound deacylated tRNA move to the P and E sites, respectively. Catalyzes the coordinated movement of the two tRNA molecules, the mRNA and conformational changes in the ribosome. The polypeptide is Elongation factor G (Nitratiruptor sp. (strain SB155-2)).